Reading from the N-terminus, the 917-residue chain is Isoleucine--tRNA ligase (917 aa).

Positions 56, 67, 554, 555, 557, 558, and 585 each coordinate L-isoleucyl-5'-AMP. The 'HIGH' region signature appears at 57 to 67 (PYANGNLHMGH). The 'KMSKS' region motif lies at 595–599 (KMSKS). Lys-598 contributes to the ATP binding site. Residues Arg-632 and Gln-640 each coordinate tRNA(Ile). Residues Cys-886, Cys-889, Cys-906, and Cys-909 each coordinate Zn(2+).

It belongs to the class-I aminoacyl-tRNA synthetase family. IleS type 1 subfamily. As to quaternary structure, monomer. Zn(2+) serves as cofactor.

Its subcellular location is the cytoplasm. The enzyme catalyses tRNA(Ile) + L-isoleucine + ATP = L-isoleucyl-tRNA(Ile) + AMP + diphosphate. Catalyzes the attachment of isoleucine to tRNA(Ile). As IleRS can inadvertently accommodate and process structurally similar amino acids such as valine, to avoid such errors it has two additional distinct tRNA(Ile)-dependent editing activities. One activity is designated as 'pretransfer' editing and involves the hydrolysis of activated Val-AMP. The other activity is designated 'posttransfer' editing and involves deacylation of mischarged Val-tRNA(Ile). This chain is Isoleucine--tRNA ligase (ileS), found in Staphylococcus aureus.